The sequence spans 798 residues: Protocadherin beta-13 (798 aa).

The signal sequence occupies residues 1–28; the sequence is MEASGKLICRQRQVLFSFLLLGLSLAGA. Over 29–690 the chain is Extracellular; it reads AEPRSYSVVE…AQADLLTVYL (662 aa). 5 Cadherin domains span residues 36–134, 139–243, 248–348, 353–451, and 456–561; these read VVEE…SPVF, MLVK…APEF, YRVQ…APEV, FTSP…APAF, and YTLF…SPFV. N418 and N436 each carry an N-linked (GlcNAc...) asparagine glycan. N567 carries N-linked (GlcNAc...) asparagine glycosylation. The region spanning 568–671 is the Cadherin 6 domain; sequence GSAPCTELVP…LVDGFSQPYL (104 aa). Residues 691–711 traverse the membrane as a helical segment; sequence VVALASVSSLFLFSVLLFVAV. Topologically, residues 712 to 798 are cytoplasmic; that stretch reads RLCRRSRAAS…FPNNFGFNIQ (87 aa).

The protein resides in the cell membrane. Functionally, potential calcium-dependent cell-adhesion protein. May be involved in the establishment and maintenance of specific neuronal connections in the brain. This is Protocadherin beta-13 (PCDHB13) from Homo sapiens (Human).